Consider the following 238-residue polypeptide: U2 small nuclear ribonucleoprotein A' (238 aa).

LRR repeat units lie at residues 19–40 (KQVT…GITK), 42–63 (TYEV…PRLK), 64–84 (NLKV…DKLP), and 89–110 (HLQS…RILC). An LRRCT domain is found at 123-161 (NPITDSPNYRYFIVWLIPTLKVLDFSKVKQKELVKAKEL).

The protein belongs to the U2 small nuclear ribonucleoprotein A family. Associated with the spliceosome.

Its subcellular location is the nucleus. Functionally, involved in pre-mRNA splicing. This chain is U2 small nuclear ribonucleoprotein A' (LEA1), found in Debaryomyces hansenii (strain ATCC 36239 / CBS 767 / BCRC 21394 / JCM 1990 / NBRC 0083 / IGC 2968) (Yeast).